The primary structure comprises 336 residues: DNA repair protein RAD51 homolog A (336 aa).

The 30-residue stretch at 45–74 (TVEAVAYAPKKELLNIKGISEAKAEKILAE) folds into the HhH domain. 124-131 (GEFRTGKT) contributes to the ATP binding site. A Nuclear export signal motif is present at residues 242-257 (LARFLRMLLRLADEFG).

Belongs to the RecA family. RAD51 subfamily. In terms of assembly, forms linear homooligomers, giving rise to a RAD51 nucleoprotein filament, which is essential for strand-pairing reactions during DNA recombination.

It localises to the nucleus. The protein localises to the cytoplasm. The protein resides in the chromosome. Functionally, plays an important role in homologous strand exchange, a key step in DNA repair through homologous recombination (HR). Binds to single-stranded DNA in an ATP-dependent manner to form nucleoprotein filaments which are essential for the homology search and strand exchange. Catalyzes the recognition of homology and strand exchange between homologous DNA partners to form a joint molecule between a processed DNA break and the repair template. Recruited to resolve stalled replication forks during replication stress. Also involved in interstrand cross-link repair. The protein is DNA repair protein RAD51 homolog A (rad51-a) of Xenopus laevis (African clawed frog).